A 202-amino-acid polypeptide reads, in one-letter code: Acireductone dioxygenase (202 aa).

Fe(2+)-binding residues include histidine 110, histidine 112, glutamate 116, and histidine 154. 4 residues coordinate Ni(2+): histidine 110, histidine 112, glutamate 116, and histidine 154.

This sequence belongs to the acireductone dioxygenase (ARD) family. In terms of assembly, monomer. Requires Fe(2+) as cofactor. Ni(2+) serves as cofactor.

It catalyses the reaction 1,2-dihydroxy-5-(methylsulfanyl)pent-1-en-3-one + O2 = 3-(methylsulfanyl)propanoate + CO + formate + 2 H(+). The catalysed reaction is 1,2-dihydroxy-5-(methylsulfanyl)pent-1-en-3-one + O2 = 4-methylsulfanyl-2-oxobutanoate + formate + 2 H(+). It participates in amino-acid biosynthesis; L-methionine biosynthesis via salvage pathway; L-methionine from S-methyl-5-thio-alpha-D-ribose 1-phosphate: step 5/6. Catalyzes 2 different reactions between oxygen and the acireductone 1,2-dihydroxy-3-keto-5-methylthiopentene (DHK-MTPene) depending upon the metal bound in the active site. Fe-containing acireductone dioxygenase (Fe-ARD) produces formate and 2-keto-4-methylthiobutyrate (KMTB), the alpha-ketoacid precursor of methionine in the methionine recycle pathway. Ni-containing acireductone dioxygenase (Ni-ARD) produces methylthiopropionate, carbon monoxide and formate, and does not lie on the methionine recycle pathway. The chain is Acireductone dioxygenase from Synechococcus sp. (strain CC9311).